The chain runs to 292 residues: Formamidopyrimidine-DNA glycosylase (292 aa).

Pro-2 serves as the catalytic Schiff-base intermediate with DNA. Glu-3 functions as the Proton donor in the catalytic mechanism. Lys-61 acts as the Proton donor; for beta-elimination activity in catalysis. 3 residues coordinate DNA: His-103, Arg-122, and Lys-168. The segment at 254–288 adopts an FPG-type zinc-finger fold; it reads DAYGREGEHCRRCGAVMRREKFMNRSSFYCPRCQP. The Proton donor; for delta-elimination activity role is filled by Arg-278.

It belongs to the FPG family. In terms of assembly, monomer. The cofactor is Zn(2+).

The catalysed reaction is Hydrolysis of DNA containing ring-opened 7-methylguanine residues, releasing 2,6-diamino-4-hydroxy-5-(N-methyl)formamidopyrimidine.. The enzyme catalyses 2'-deoxyribonucleotide-(2'-deoxyribose 5'-phosphate)-2'-deoxyribonucleotide-DNA = a 3'-end 2'-deoxyribonucleotide-(2,3-dehydro-2,3-deoxyribose 5'-phosphate)-DNA + a 5'-end 5'-phospho-2'-deoxyribonucleoside-DNA + H(+). In terms of biological role, involved in base excision repair of DNA damaged by oxidation or by mutagenic agents. Acts as a DNA glycosylase that recognizes and removes damaged bases. Has a preference for oxidized purines, such as 7,8-dihydro-8-oxoguanine (8-oxoG). Has AP (apurinic/apyrimidinic) lyase activity and introduces nicks in the DNA strand. Cleaves the DNA backbone by beta-delta elimination to generate a single-strand break at the site of the removed base with both 3'- and 5'-phosphates. The polypeptide is Formamidopyrimidine-DNA glycosylase (Mycobacterium ulcerans (strain Agy99)).